The chain runs to 470 residues: Serine hydroxymethyltransferase 5 (470 aa).

At lysine 244 the chain carries N6-(pyridoxal phosphate)lysine.

It belongs to the SHMT family. Homotetramer. Requires pyridoxal 5'-phosphate as cofactor.

The protein localises to the cytoplasm. The enzyme catalyses (6R)-5,10-methylene-5,6,7,8-tetrahydrofolate + glycine + H2O = (6S)-5,6,7,8-tetrahydrofolate + L-serine. Its pathway is one-carbon metabolism; tetrahydrofolate interconversion. In terms of biological role, catalyzes the interconversion of serine and glycine. In Arabidopsis thaliana (Mouse-ear cress), this protein is Serine hydroxymethyltransferase 5 (SHM5).